The sequence spans 486 residues: Envelope glycoprotein gp63 (486 aa).

Residues 1 to 18 form the signal peptide; sequence MGNVFFLLLFSLTHFPLA. The Extracellular portion of the chain corresponds to 19 to 438; it reads QQSRCTLTIG…LGLSQWAREA (420 aa). Asn-136 and Asn-218 each carry an N-linked (GlcNAc...) asparagine; by host glycan. Positions 221–224 match the CXXC motif; that stretch reads CMVC. 3 cysteine pairs are disulfide-bonded: Cys-221-Cys-224, Cys-221-Cys-397, and Cys-389-Cys-396. Asn-240 and Asn-286 each carry an N-linked (GlcNAc...) asparagine; by host glycan. Positions 309–329 are fusion peptide; that stretch reads AVPIAVWLVSALAAGTGIAGG. 2 coiled-coil regions span residues 337–383 and 393–425; these read ASSK…LLFW and QEQC…GWGL. Residues 372–388 are immunosuppression; the sequence is AQNRRGLDLLFWEQGGL. The CX6CC signature appears at 389–397; it reads CKAIQEQCC. Asn-400 is a glycosylation site (N-linked (GlcNAc...) asparagine; by host). Residues 439–459 form a helical membrane-spanning segment; the sequence is LQTGITILALLLLVILFGPCI. Residue Cys-458 is the site of S-palmitoyl cysteine; by host attachment. Over 460 to 486 the chain is Cytoplasmic; sequence LRQIQALPQRLQNRHNQYSLINPETML.

As to quaternary structure, the mature envelope protein (Env) consists of a trimer of SU-TM heterodimers attached by a labile interchain disulfide bond. Post-translationally, specific enzymatic cleavages in vivo yield mature proteins. Envelope glycoproteins are synthesized as an inactive precursor that is N-glycosylated and processed likely by host cell furin or by a furin-like protease in the Golgi to yield the mature SU and TM proteins. The cleavage site between SU and TM requires the minimal sequence [KR]-X-[KR]-R. The CXXC motif is highly conserved across a broad range of retroviral envelope proteins. It is thought to participate in the formation of a labile disulfide bond possibly with the CX6CC motif present in the transmembrane protein. Isomerization of the intersubunit disulfide bond to an SU intrachain disulfide bond is thought to occur upon receptor recognition in order to allow membrane fusion. In terms of processing, the transmembrane protein is palmitoylated.

It localises to the virion membrane. It is found in the host cell membrane. In terms of biological role, the surface protein (SU) attaches the virus to the host cell by binding to its receptor. This interaction triggers the refolding of the transmembrane protein (TM) and is thought to activate its fusogenic potential by unmasking its fusion peptide. Fusion occurs at the host cell plasma membrane. Functionally, the transmembrane protein (TM) acts as a class I viral fusion protein. Under the current model, the protein has at least 3 conformational states: pre-fusion native state, pre-hairpin intermediate state, and post-fusion hairpin state. During viral and target cell membrane fusion, the coiled coil regions (heptad repeats) assume a trimer-of-hairpins structure, positioning the fusion peptide in close proximity to the C-terminal region of the ectodomain. The formation of this structure appears to drive apposition and subsequent fusion of viral and target cell membranes. Membranes fusion leads to delivery of the nucleocapsid into the cytoplasm. The chain is Envelope glycoprotein gp63 (env) from Homo sapiens (Human).